A 115-amino-acid chain; its full sequence is Large ribosomal subunit protein bL19 (115 aa).

The protein belongs to the bacterial ribosomal protein bL19 family.

Its function is as follows. This protein is located at the 30S-50S ribosomal subunit interface and may play a role in the structure and function of the aminoacyl-tRNA binding site. In Francisella tularensis subsp. tularensis (strain FSC 198), this protein is Large ribosomal subunit protein bL19.